The following is a 608-amino-acid chain: Isocitrate dehydrogenase kinase/phosphatase (608 aa).

Residues 328–334 (APGIKGL) and Lys-349 each bind ATP. Asp-384 is a catalytic residue.

Belongs to the AceK family.

Its subcellular location is the cytoplasm. The catalysed reaction is L-seryl-[isocitrate dehydrogenase] + ATP = O-phospho-L-seryl-[isocitrate dehydrogenase] + ADP + H(+). Functionally, bifunctional enzyme which can phosphorylate or dephosphorylate isocitrate dehydrogenase (IDH) on a specific serine residue. This is a regulatory mechanism which enables bacteria to bypass the Krebs cycle via the glyoxylate shunt in response to the source of carbon. When bacteria are grown on glucose, IDH is fully active and unphosphorylated, but when grown on acetate or ethanol, the activity of IDH declines drastically concomitant with its phosphorylation. In Cupriavidus pinatubonensis (strain JMP 134 / LMG 1197) (Cupriavidus necator (strain JMP 134)), this protein is Isocitrate dehydrogenase kinase/phosphatase.